The following is a 420-amino-acid chain: Glycogen synthase kinase-3 beta (420 aa).

The span at 1 to 22 (MSGRPRTTSFAESCKPVQQPSA) shows a compositional bias: polar residues. Positions 1-53 (MSGRPRTTSFAESCKPVQQPSAFGSMKVSRDKDGSKVTTVVATPGQGPDRPQE) are disordered. The residue at position 9 (Ser9) is a Phosphoserine; by PKB/AKT1, RPS6KA3 and SGK3. A lipid anchor (S-palmitoyl cysteine) is attached at Cys14. The Protein kinase domain occupies 56-340 (YTDTKVIGNG…PLEACAHSFF (285 aa)). Residues 62–70 (IGNGSFGVV) and Lys85 contribute to the ATP site. Asp181 (proton acceptor) is an active-site residue. Residue Tyr216 is modified to Phosphotyrosine. A compositionally biased stretch (low complexity) spans 386–401 (AAASTPTNATAASDAN). A disordered region spans residues 386 to 420 (AAASTPTNATAASDANTGDRGQTNNAASASASNST). Ser389 is subject to Phosphoserine. Phosphothreonine occurs at positions 390 and 402. The segment covering 409–420 (NNAASASASNST) has biased composition (low complexity).

This sequence belongs to the protein kinase superfamily. CMGC Ser/Thr protein kinase family. GSK-3 subfamily. As to quaternary structure, monomer. Interacts with ARRB2, DISC1 and ZBED3. Interacts with CABYR, MMP2, MUC1, NIN and PRUNE1. Interacts with AXIN1; the interaction mediates hyperphosphorylation of CTNNB1 leading to its ubiquitination and destruction. Interacts with and phosphorylates SNAI1. Interacts with DNM1L (via a C-terminal domain). Found in a complex composed of MACF1, APC, AXIN1, CTNNB1 and GSK3B. Interacts with SGK3. Interacts with DAB2IP (via C2 domain); the interaction stimulates GSK3B kinase activation. Interacts (via C2 domain) with PPP2CA. Interacts with the CLOCK-BMAL1 heterodimer. Interacts with the BMAL1. Interacts with CTNND2. Interacts with NCYM. The complex composed, at least, of APC, CTNNB1 and GSK3B interacts with JPT1; the interaction requires the inactive form of GSK3B (phosphorylated at 'Ser-9'). Forms a complex composed of PRKAR2A or PRKAR2B, GSK3B and GSKIP through GSKIP interaction; facilitates PKA-induced phosphorylation and regulates GSK3B activity. Interacts with GSKIP. Interacts with GID8. Interacts with PIWIL2. Interacts with LMBR1L. Interacts with DDX3X. Interacts with BIRC2. Interacts with TNFRSF10B; TNFRSF10B stimulation inhibits GSK3B kinase activity. Interacts with RICTOR; the interaction results in phosphorylation of RICTOR at 'Thr-1695' by GSK3B which facilitates FBXW7-mediated ubiquitination and subsequent degradation of RICTOR. Found in a complex with SLC39A6, SLC39A10 and with GSK3B that controls NCAM1 phosphorylation. Interacts with PKP3 (via ARM repeats); the interaction may be involved in PKP3 protein degradation. In terms of processing, phosphorylated by AKT1 and ILK1. Upon insulin-mediated signaling, the activated PKB/AKT1 protein kinase phosphorylates and deactivates GSK3B, resulting in the dephosphorylation and activation of GYS1. Activated by phosphorylation at Tyr-216. Inactivated by phosphorylation at Ser-9. Phosphorylated in a circadian manner in the hippocampus. Mono-ADP-ribosylation by PARP10 negatively regulates kinase activity. Post-translationally, palmitoylated. Palmitoylation by ZDHHC4 prevents AKT1-mediated phosphorylation. As to expression, expressed in testis, thymus, prostate and ovary and weakly expressed in lung, brain and kidney. Colocalizes with EIF2AK2/PKR and TAU in the Alzheimer disease (AD) brain.

The protein localises to the cytoplasm. It localises to the nucleus. It is found in the cell membrane. It carries out the reaction L-seryl-[tau protein] + ATP = O-phospho-L-seryl-[tau protein] + ADP + H(+). The catalysed reaction is L-threonyl-[tau protein] + ATP = O-phospho-L-threonyl-[tau protein] + ADP + H(+). It catalyses the reaction L-seryl-[protein] + ATP = O-phospho-L-seryl-[protein] + ADP + H(+). The enzyme catalyses L-threonyl-[protein] + ATP = O-phospho-L-threonyl-[protein] + ADP + H(+). Activated by phosphorylation at Tyr-216. In response to insulin, inhibited by phosphorylation at Ser-9 by PKB/AKT1 and RPS6KA3; phosphorylation at this site causes a conformational change, preventing access of substrates to the active site. Inhibited by IL22 treatment which also triggers phosphorylation at Ser-9, promoting inactivation. Inhibited by lithium. Constitutively active protein kinase that acts as a negative regulator in the hormonal control of glucose homeostasis, Wnt signaling and regulation of transcription factors and microtubules, by phosphorylating and inactivating glycogen synthase (GYS1 or GYS2), EIF2B, CTNNB1/beta-catenin, APC, AXIN1, DPYSL2/CRMP2, JUN, NFATC1/NFATC, MAPT/TAU and MACF1. Requires primed phosphorylation of the majority of its substrates. In skeletal muscle, contributes to insulin regulation of glycogen synthesis by phosphorylating and inhibiting GYS1 activity and hence glycogen synthesis. May also mediate the development of insulin resistance by regulating activation of transcription factors. Regulates protein synthesis by controlling the activity of initiation factor 2B (EIF2BE/EIF2B5) in the same manner as glycogen synthase. In Wnt signaling, GSK3B forms a multimeric complex with APC, AXIN1 and CTNNB1/beta-catenin and phosphorylates the N-terminus of CTNNB1 leading to its degradation mediated by ubiquitin/proteasomes. Phosphorylates JUN at sites proximal to its DNA-binding domain, thereby reducing its affinity for DNA. Phosphorylates NFATC1/NFATC on conserved serine residues promoting NFATC1/NFATC nuclear export, shutting off NFATC1/NFATC gene regulation, and thereby opposing the action of calcineurin. Phosphorylates MAPT/TAU on 'Thr-548', decreasing significantly MAPT/TAU ability to bind and stabilize microtubules. MAPT/TAU is the principal component of neurofibrillary tangles in Alzheimer disease. Plays an important role in ERBB2-dependent stabilization of microtubules at the cell cortex. Phosphorylates MACF1, inhibiting its binding to microtubules which is critical for its role in bulge stem cell migration and skin wound repair. Probably regulates NF-kappa-B (NFKB1) at the transcriptional level and is required for the NF-kappa-B-mediated anti-apoptotic response to TNF-alpha (TNF/TNFA). Negatively regulates replication in pancreatic beta-cells, resulting in apoptosis, loss of beta-cells and diabetes. Through phosphorylation of the anti-apoptotic protein MCL1, may control cell apoptosis in response to growth factors deprivation. Phosphorylates MUC1 in breast cancer cells, decreasing the interaction of MUC1 with CTNNB1/beta-catenin. Is necessary for the establishment of neuronal polarity and axon outgrowth. Phosphorylates MARK2, leading to inhibition of its activity. Phosphorylates SIK1 at 'Thr-182', leading to sustainment of its activity. Phosphorylates ZC3HAV1 which enhances its antiviral activity. Phosphorylates SNAI1, leading to its ubiquitination and proteasomal degradation. Phosphorylates SFPQ at 'Thr-687' upon T-cell activation. Phosphorylates NR1D1 st 'Ser-55' and 'Ser-59' and stabilizes it by protecting it from proteasomal degradation. Regulates the circadian clock via phosphorylation of the major clock components including BMAL1, CLOCK and PER2. Phosphorylates FBXL2 at 'Thr-404' and primes it for ubiquitination by the SCF(FBXO3) complex and proteasomal degradation. Phosphorylates CLOCK AT 'Ser-427' and targets it for proteasomal degradation. Phosphorylates BMAL1 at 'Ser-17' and 'Ser-21' and primes it for ubiquitination and proteasomal degradation. Phosphorylates OGT at 'Ser-3' or 'Ser-4' which positively regulates its activity. Phosphorylates MYCN in neuroblastoma cells which may promote its degradation. Regulates the circadian rhythmicity of hippocampal long-term potentiation and BMAL1 and PER2 expression. Acts as a regulator of autophagy by mediating phosphorylation of KAT5/TIP60 under starvation conditions, activating KAT5/TIP60 acetyltransferase activity and promoting acetylation of key autophagy regulators, such as ULK1 and RUBCNL/Pacer. Negatively regulates extrinsic apoptotic signaling pathway via death domain receptors. Promotes the formation of an anti-apoptotic complex, made of DDX3X, BRIC2 and GSK3B, at death receptors, including TNFRSF10B. The anti-apoptotic function is most effective with weak apoptotic signals and can be overcome by stronger stimulation. Phosphorylates E2F1, promoting the interaction between E2F1 and USP11, stabilizing E2F1 and promoting its activity. Phosphorylates mTORC2 complex component RICTOR at 'Ser-1235' in response to endoplasmic stress, inhibiting mTORC2. Phosphorylates mTORC2 complex component RICTOR at 'Thr-1695' which facilitates FBXW7-mediated ubiquitination and subsequent degradation of RICTOR. Phosphorylates FXR1, promoting FXR1 ubiquitination by the SCF(FBXO4) complex and FXR1 degradation by the proteasome. Phosphorylates interleukin-22 receptor subunit IL22RA1, preventing its proteasomal degradation. This Homo sapiens (Human) protein is Glycogen synthase kinase-3 beta.